The following is a 354-amino-acid chain: MKLQTTYPSNNYPIFVEHGAIDHISTYIDQFDQSFILIDEHVNQYFADKFDDILSYENVHKVIIPAGEKTKTFEQYQETLEYILSHHVTRNTAIIAVGGGATGDFAGFVAATLLRGVHFIQVPTTILAHDSSVGGKVGINSKQGKNLIGAFYRPTAVIYDLDFLKTLPFEQILSGYAEVYKHALLNGESTTQEIEQHFKDREILQSLNGMDKYIAKGIETKLDIVVADEKEQGVRKFLNLGHTFGHAVEYNHKIAHGHAVMIGIIYQFIVANILFNSNHDIQHYINYLTKLGYPLETITDIDFETIYQYMLSDKKNDKQGVQMVLIKHFGDIVVQHIDQTTLQHACEQLKTYFK.

Residues 100–104, 124–125, lysine 136, lysine 145, and 163–166 contribute to the NAD(+) site; these read GATGD, TT, and FLKT. Residues glutamate 178, histidine 242, and histidine 256 each contribute to the Zn(2+) site.

This sequence belongs to the sugar phosphate cyclases superfamily. Dehydroquinate synthase family. Requires NAD(+) as cofactor. The cofactor is Co(2+). Zn(2+) serves as cofactor.

It is found in the cytoplasm. The catalysed reaction is 7-phospho-2-dehydro-3-deoxy-D-arabino-heptonate = 3-dehydroquinate + phosphate. It participates in metabolic intermediate biosynthesis; chorismate biosynthesis; chorismate from D-erythrose 4-phosphate and phosphoenolpyruvate: step 2/7. Functionally, catalyzes the conversion of 3-deoxy-D-arabino-heptulosonate 7-phosphate (DAHP) to dehydroquinate (DHQ). The sequence is that of 3-dehydroquinate synthase from Staphylococcus aureus (strain Mu50 / ATCC 700699).